Reading from the N-terminus, the 455-residue chain is Fez family zinc finger protein 2 (455 aa).

Residues 1 to 22 (MASSASLETMVPPACPRAGASP) are disordered. Positions 27–42 (TLAFSIERIMAKTSEP) match the Engrailed homology 1 repressor motif. C2H2-type zinc fingers lie at residues 272–294 (FTCE…MPVH), 300–322 (FVCK…KIIH), 328–350 (HKCN…IRIH), 356–378 (FVCE…KLTH), 384–406 (YKCT…MHTH), and 412–435 (FTCA…RKLH).

This sequence belongs to the krueppel C2H2-type zinc-finger protein family. As to expression, highly expressed in neocortical layer V, moderately expressed in layer VI. Expressed in subcortically projecting neurons.

It is found in the nucleus. Its function is as follows. Transcription repressor. Required for the specification of corticospinal motor neurons and other subcerebral projection neurons. May play a role in layer and neuronal subtype-specific patterning of subcortical projections and axonal fasciculation. Controls the development of dendritic arborization and spines of large layer V pyramidal neurons. Plays a role in rostro-caudal patterning of the diencephalon and in prethalamic formation. The chain is Fez family zinc finger protein 2 (Fezf2) from Mus musculus (Mouse).